Reading from the N-terminus, the 541-residue chain is Chaperonin GroEL 5 (541 aa).

ATP is bound by residues 30 to 33 (TLGP), G415, and D496.

This sequence belongs to the chaperonin (HSP60) family. In terms of assembly, forms a cylinder of 14 subunits composed of two heptameric rings stacked back-to-back. Interacts with the co-chaperonin GroES.

The protein resides in the cytoplasm. It catalyses the reaction ATP + H2O + a folded polypeptide = ADP + phosphate + an unfolded polypeptide.. Functionally, together with its co-chaperonin GroES, plays an essential role in assisting protein folding. The GroEL-GroES system forms a nano-cage that allows encapsulation of the non-native substrate proteins and provides a physical environment optimized to promote and accelerate protein folding. This chain is Chaperonin GroEL 5, found in Bradyrhizobium diazoefficiens (strain JCM 10833 / BCRC 13528 / IAM 13628 / NBRC 14792 / USDA 110).